The sequence spans 118 residues: Small ribosomal subunit protein uS13 (118 aa).

Positions Gly94 to Lys118 are disordered.

It belongs to the universal ribosomal protein uS13 family. As to quaternary structure, part of the 30S ribosomal subunit. Forms a loose heterodimer with protein S19. Forms two bridges to the 50S subunit in the 70S ribosome.

Located at the top of the head of the 30S subunit, it contacts several helices of the 16S rRNA. In the 70S ribosome it contacts the 23S rRNA (bridge B1a) and protein L5 of the 50S subunit (bridge B1b), connecting the 2 subunits; these bridges are implicated in subunit movement. Contacts the tRNAs in the A and P-sites. This is Small ribosomal subunit protein uS13 from Thioalkalivibrio sulfidiphilus (strain HL-EbGR7).